The chain runs to 89 residues: ATP synthase subunit e, mitochondrial (89 aa).

Ser1 is modified (N-acetylserine). Residues 8–25 (YSSLAAGIVYGAYHTYTL) traverse the membrane as a helical segment.

F-type ATP synthases have 2 components, the catalytic core F(1) and the membrane-embedded component F(0), linked together by a central stalk and a peripheral stalk. The central stalk, also called rotor shaft, is often seen as part of F(1). The peripheral stalk is seen as part of F(0). F(0) contains the membrane channel next to the rotor. F-type ATP synthases form dimers but each monomer functions independently in ATP generation. The dimer consists of 18 different polypeptides: ATP1 (subunit alpha, part of F(1), 3 molecules per monomer), ATP2 (subunit beta, part of F(1), 3 molecules per monomer), ATP3 (subunit gamma, part of the central stalk), ATP4 (subunit b, part of the peripheral stalk), ATP5/OSCP (subunit 5/OSCP, part of the peripheral stalk), ATP6 (subunit a, part of the peripheral stalk), ATP7 (subunit d, part of the peripheral stalk), ATP8 (subunit 8, part of the peripheral stalk), OLI1 (subunit c, part of the rotor, 10 molecules per monomer), ATP14 (subunit h, part of the peripheral stalk), ATP15 (subunit epsilon, part of the central stalk), ATP16 (subunit delta, part of the central stalk), ATP17 (subunit f, part of the peripheral stalk), ATP18 (subunit i/j, part of the peripheral stalk). Dimer-specific subunits are ATP19 (subunit k, at interface between monomers), ATP20 (subunit g, at interface between monomers), TIM11 (subunit e, at interface between monomers). Also contains subunit L.

Its subcellular location is the mitochondrion inner membrane. Mitochondrial membrane ATP synthase (F(1)F(0) ATP synthase or Complex V) produces ATP from ADP in the presence of a proton gradient across the membrane which is generated by electron transport complexes of the respiratory chain. F-type ATP synthases consist of two structural domains, F(1) - containing the extramembraneous catalytic core, and F(0) - containing the membrane proton channel, linked together by a central stalk and a peripheral stalk. During catalysis, ATP synthesis in the catalytic domain of F(1) is coupled via a rotary mechanism of the central stalk subunits to proton translocation. Part of the complex F(0) domain. Minor subunit located with subunit a/ATP6 in the membrane. Together with subunit g/ATP20, probably contributes to membrane curvature at the site of the ATP synthase dimer, ultimately contributing to formation of cristae. The polypeptide is ATP synthase subunit e, mitochondrial (Pichia angusta (Yeast)).